Consider the following 384-residue polypeptide: Autophagy-related protein 30 (384 aa).

The interval 1–63 (MFSRKQVQKR…ASPGQLRPRT (63 aa)) is disordered. Residues 13–27 (ELSSLHCSNSSNSLN) are compositionally biased toward low complexity. Over residues 45 to 63 (RGNNRSDNVASPGQLRPRT) the composition is skewed to polar residues. Residue S112 is modified to Phosphoserine. Residues 266 to 291 (VKHDKPSSPLPNYHNTLKQAPSSNSQ) form a disordered region. Polar residues predominate over residues 278–291 (YHNTLKQAPSSNSQ).

In terms of assembly, interacts with ATG11, ATG17, ATG37, PEX3 and PEX14. Post-translationally, phosphorylation at Ser-112 is required for micro- and macropexophagy.

Its subcellular location is the vacuole lumen. It is found in the preautophagosomal structure. The protein resides in the peroxisome membrane. In terms of biological role, acts as the peroxisome receptor for pexophagy. Required for both micropexophagy and macropexophagy, but not for the cytoplasm to vacuole transport (Cvt) or autophagy pathways. Required for functional micropexophagic apparatus (MIPA) and relocation of ATG11 to the peroxisome-sequestering arms of the vacuole. This is Autophagy-related protein 30 (ATG30) from Komagataella phaffii (strain GS115 / ATCC 20864) (Yeast).